A 293-amino-acid chain; its full sequence is Phosphatidylserine decarboxylase proenzyme (293 aa).

Active-site charge relay system; for autoendoproteolytic cleavage activity residues include D88, H144, and S247. S247 (schiff-base intermediate with substrate; via pyruvic acid; for decarboxylase activity) is an active-site residue. S247 carries the post-translational modification Pyruvic acid (Ser); by autocatalysis.

The protein belongs to the phosphatidylserine decarboxylase family. PSD-B subfamily. Prokaryotic type I sub-subfamily. In terms of assembly, heterodimer of a large membrane-associated beta subunit and a small pyruvoyl-containing alpha subunit. Pyruvate is required as a cofactor. In terms of processing, is synthesized initially as an inactive proenzyme. Formation of the active enzyme involves a self-maturation process in which the active site pyruvoyl group is generated from an internal serine residue via an autocatalytic post-translational modification. Two non-identical subunits are generated from the proenzyme in this reaction, and the pyruvate is formed at the N-terminus of the alpha chain, which is derived from the carboxyl end of the proenzyme. The autoendoproteolytic cleavage occurs by a canonical serine protease mechanism, in which the side chain hydroxyl group of the serine supplies its oxygen atom to form the C-terminus of the beta chain, while the remainder of the serine residue undergoes an oxidative deamination to produce ammonia and the pyruvoyl prosthetic group on the alpha chain. During this reaction, the Ser that is part of the protease active site of the proenzyme becomes the pyruvoyl prosthetic group, which constitutes an essential element of the active site of the mature decarboxylase.

Its subcellular location is the cell membrane. It catalyses the reaction a 1,2-diacyl-sn-glycero-3-phospho-L-serine + H(+) = a 1,2-diacyl-sn-glycero-3-phosphoethanolamine + CO2. The protein operates within phospholipid metabolism; phosphatidylethanolamine biosynthesis; phosphatidylethanolamine from CDP-diacylglycerol: step 2/2. Its function is as follows. Catalyzes the formation of phosphatidylethanolamine (PtdEtn) from phosphatidylserine (PtdSer). This Xylella fastidiosa (strain 9a5c) protein is Phosphatidylserine decarboxylase proenzyme.